Reading from the N-terminus, the 365-residue chain is Protein-glutamate methylesterase/protein-glutamine glutaminase 2 (365 aa).

The 118-residue stretch at 6-123 folds into the Response regulatory domain; sequence RVLIIDDSAS…ADSLSDDAMR (118 aa). Aspartate 57 is subject to 4-aspartylphosphate. Residues 173–359 form the CheB-type methylesterase domain; sequence AKTTEMVVCV…PLDQIAREVL (187 aa). Catalysis depends on residues serine 185, histidine 211, and aspartate 307.

This sequence belongs to the CheB family. Post-translationally, phosphorylated by CheA. Phosphorylation of the N-terminal regulatory domain activates the methylesterase activity.

The protein localises to the cytoplasm. The enzyme catalyses [protein]-L-glutamate 5-O-methyl ester + H2O = L-glutamyl-[protein] + methanol + H(+). It carries out the reaction L-glutaminyl-[protein] + H2O = L-glutamyl-[protein] + NH4(+). Involved in chemotaxis. Part of a chemotaxis signal transduction system that modulates chemotaxis in response to various stimuli. Catalyzes the demethylation of specific methylglutamate residues introduced into the chemoreceptors (methyl-accepting chemotaxis proteins or MCP) by CheR. Also mediates the irreversible deamidation of specific glutamine residues to glutamic acid. The chain is Protein-glutamate methylesterase/protein-glutamine glutaminase 2 from Rhizobium johnstonii (strain DSM 114642 / LMG 32736 / 3841) (Rhizobium leguminosarum bv. viciae).